We begin with the raw amino-acid sequence, 257 residues long: Pyrroline-5-carboxylate reductase (257 aa).

It belongs to the pyrroline-5-carboxylate reductase family.

The protein resides in the cytoplasm. The enzyme catalyses L-proline + NADP(+) = (S)-1-pyrroline-5-carboxylate + NADPH + 2 H(+). It carries out the reaction L-proline + NAD(+) = (S)-1-pyrroline-5-carboxylate + NADH + 2 H(+). Its pathway is amino-acid biosynthesis; L-proline biosynthesis; L-proline from L-glutamate 5-semialdehyde: step 1/1. Its function is as follows. Catalyzes the reduction of 1-pyrroline-5-carboxylate (PCA) to L-proline. This Helicobacter pylori (strain J99 / ATCC 700824) (Campylobacter pylori J99) protein is Pyrroline-5-carboxylate reductase.